The chain runs to 488 residues: Calcium/calmodulin-dependent protein kinase type II subunit delta (488 aa).

At Ala-2 the chain carries N-acetylalanine. Positions 14-272 (YQLFEELGKG…ASEALKHPWI (259 aa)) constitute a Protein kinase domain. ATP-binding positions include 20 to 28 (LGKGAFSVV) and Lys-43. Asp-136 (proton acceptor) is an active-site residue. The tract at residues 283–292 (HRQETVDCLK) is autoinhibitory domain. Thr-287 is modified (phosphothreonine; by autocatalysis). Positions 291-301 (LKKFNARRKLK) are calmodulin-binding. Phosphothreonine; by autocatalysis occurs at positions 306 and 307. Ser-315 is modified (phosphoserine). Lys-317 carries the N6-acetyllysine modification. Ser-318 and Ser-340 each carry phosphoserine. The disordered stretch occupies residues 325–350 (GVKKRKSSSSVQMMESTESSNTTIED). Residues 332–347 (SSSVQMMESTESSNTT) show a composition bias toward polar residues. A Phosphothreonine modification is found at Thr-341. Residue Ser-343 is modified to Phosphoserine. Thr-346 and Thr-347 each carry phosphothreonine. Residue Ser-414 is modified to Phosphoserine.

This sequence belongs to the protein kinase superfamily. CAMK Ser/Thr protein kinase family. CaMK subfamily. CAMK2 is composed of 4 different chains: alpha (CAMK2A), beta (CAMK2B), gamma (CAMK2G), and delta (CAMK2D). The different isoforms assemble into homo- or heteromultimeric holoenzymes composed of 12 subunits with two hexameric rings stacked one on top of the other. Interacts with RRAD and CACNB2. Autophosphorylation of Thr-287 following activation by Ca(2+)/calmodulin. Phosphorylation of Thr-287 locks the kinase into an activated state.

The protein resides in the cell membrane. The protein localises to the sarcolemma. It localises to the sarcoplasmic reticulum membrane. It carries out the reaction L-seryl-[protein] + ATP = O-phospho-L-seryl-[protein] + ADP + H(+). It catalyses the reaction L-threonyl-[protein] + ATP = O-phospho-L-threonyl-[protein] + ADP + H(+). Its activity is regulated as follows. Activated by Ca(2+)/calmodulin. Binding of calmodulin results in conformational change that relieves intrasteric autoinhibition and allows autophosphorylation of Thr-287 which turns the kinase in a constitutively active form and confers to the kinase a Ca(2+)-independent activity. Calcium/calmodulin-dependent protein kinase involved in the regulation of Ca(2+) homeostatis and excitation-contraction coupling (ECC) in heart by targeting ion channels, transporters and accessory proteins involved in Ca(2+) influx into the myocyte, Ca(2+) release from the sarcoplasmic reticulum (SR), SR Ca(2+) uptake and Na(+) and K(+) channel transport. Targets also transcription factors and signaling molecules to regulate heart function. In its activated form, is involved in the pathogenesis of dilated cardiomyopathy and heart failure. Contributes to cardiac decompensation and heart failure by regulating SR Ca(2+) release via direct phosphorylation of RYR2 Ca(2+) channel on 'Ser-2808'. In the nucleus, phosphorylates the MEF2 repressor HDAC4, promoting its nuclear export and binding to 14-3-3 protein, and expression of MEF2 and genes involved in the hypertrophic program. Is essential for left ventricular remodeling responses to myocardial infarction. In pathological myocardial remodeling acts downstream of the beta adrenergic receptor signaling cascade to regulate key proteins involved in ECC. Regulates Ca(2+) influx to myocytes by binding and phosphorylating the L-type Ca(2+) channel subunit beta-2 CACNB2. In addition to Ca(2+) channels, can target and regulate the cardiac sarcolemmal Na(+) channel Nav1.5/SCN5A and the K+ channel Kv4.3/KCND3, which contribute to arrhythmogenesis in heart failure. Phosphorylates phospholamban (PLN/PLB), an endogenous inhibitor of SERCA2A/ATP2A2, contributing to the enhancement of SR Ca(2+) uptake that may be important in frequency-dependent acceleration of relaxation (FDAR) and maintenance of contractile function during acidosis. May participate in the modulation of skeletal muscle function in response to exercise, by regulating SR Ca(2+) transport through phosphorylation of PLN/PLB and triadin, a ryanodine receptor-coupling factor. In response to interferon-gamma (IFN-gamma) stimulation, catalyzes phosphorylation of STAT1, stimulating the JAK-STAT signaling pathway. The protein is Calcium/calmodulin-dependent protein kinase type II subunit delta (CAMK2D) of Bos taurus (Bovine).